We begin with the raw amino-acid sequence, 249 residues long: ATP synthase subunit a, chloroplastic (249 aa).

A run of 5 helical transmembrane segments spans residues 40–60, 97–117, 136–156, 201–221, and 222–242; these read QVLI…IVAV, VPFI…GALL, INTT…AGLS, LVVV…VMFL, and GLFT…AYIG.

It belongs to the ATPase A chain family. In terms of assembly, F-type ATPases have 2 components, CF(1) - the catalytic core - and CF(0) - the membrane proton channel. CF(1) has five subunits: alpha(3), beta(3), gamma(1), delta(1), epsilon(1). CF(0) has four main subunits: a, b, b' and c.

It is found in the plastid. Its subcellular location is the chloroplast thylakoid membrane. Key component of the proton channel; it plays a direct role in the translocation of protons across the membrane. The sequence is that of ATP synthase subunit a, chloroplastic from Manihot esculenta (Cassava).